Reading from the N-terminus, the 128-residue chain is Histone H2A type 1-J (128 aa).

Residues 1-22 are disordered; it reads MSGRGKQGGKARAKAKTRSSRA. Ser-2 is modified (N-acetylserine). Phosphoserine; by RPS6KA5 is present on Ser-2. At Arg-4 the chain carries Citrulline; alternate. A Symmetric dimethylarginine; by PRMT5; alternate modification is found at Arg-4. Lys-6 is modified (N6-(2-hydroxyisobutyryl)lysine). The segment covering 7 to 19 has biased composition (basic residues); it reads QGGKARAKAKTRS. Lys-10 carries the N6-(2-hydroxyisobutyryl)lysine; alternate modification. N6-(beta-hydroxybutyryl)lysine; alternate occurs at positions 10 and 14. N6-lactoyllysine; alternate is present on Lys-10. The residue at position 10 (Lys-10) is an N6-succinyllysine; alternate. Residue Lys-14 forms a Glycyl lysine isopeptide (Lys-Gly) (interchain with G-Cter in ubiquitin); alternate linkage. Lys-16 participates in a covalent cross-link: Glycyl lysine isopeptide (Lys-Gly) (interchain with G-Cter in ubiquitin). Lys-37 carries the post-translational modification N6-(2-hydroxyisobutyryl)lysine; alternate. Lys-37 is modified (N6-(beta-hydroxybutyryl)lysine; alternate). Lys-37 is modified (N6-crotonyllysine; alternate). Residues Lys-75 and Lys-76 each carry the N6-(2-hydroxyisobutyryl)lysine modification. Residue Lys-96 is modified to N6-(2-hydroxyisobutyryl)lysine; alternate. Lys-96 is subject to N6-(beta-hydroxybutyryl)lysine; alternate. Lys-96 is subject to N6-succinyllysine; alternate. Lys-96 is modified (N6-glutaryllysine; alternate). Position 100 is an N6-glutaryllysine (Lys-100). Position 105 is an N5-methylglutamine (Gln-105). Lys-119 bears the N6-(2-hydroxyisobutyryl)lysine; alternate mark. Lys-119 carries the N6-(beta-hydroxybutyryl)lysine; alternate modification. N6-crotonyllysine; alternate occurs at positions 119 and 120. Lys-119 and Lys-120 each carry N6-glutaryllysine; alternate. Residue Lys-120 forms a Glycyl lysine isopeptide (Lys-Gly) (interchain with G-Cter in ubiquitin); alternate linkage. Residue Thr-121 is modified to Phosphothreonine; by DCAF1. Lys-126 is modified (N6-crotonyllysine; alternate). Lys-126 is subject to N6-glutaryllysine; alternate.

It belongs to the histone H2A family. The nucleosome is a histone octamer containing two molecules each of H2A, H2B, H3 and H4 assembled in one H3-H4 heterotetramer and two H2A-H2B heterodimers. The octamer wraps approximately 147 bp of DNA. Deiminated on Arg-4 in granulocytes upon calcium entry. In terms of processing, monoubiquitination of Lys-120 (H2AK119Ub) by RING1, TRIM37 and RNF2/RING2 complex gives a specific tag for epigenetic transcriptional repression and participates in X chromosome inactivation of female mammals. It is involved in the initiation of both imprinted and random X inactivation. Ubiquitinated H2A is enriched in inactive X chromosome chromatin. Ubiquitination of H2A functions downstream of methylation of 'Lys-27' of histone H3 (H3K27me). H2AK119Ub by RNF2/RING2 can also be induced by ultraviolet and may be involved in DNA repair. Monoubiquitination of Lys-120 (H2AK119Ub) by TRIM37 may promote transformation of cells in a number of breast cancers. Following DNA double-strand breaks (DSBs), it is ubiquitinated through 'Lys-63' linkage of ubiquitin moieties by the E2 ligase UBE2N and the E3 ligases RNF8 and RNF168, leading to the recruitment of repair proteins to sites of DNA damage. Ubiquitination at Lys-14 and Lys-16 (H2AK13Ub and H2AK15Ub, respectively) in response to DNA damage is initiated by RNF168 that mediates monoubiquitination at these 2 sites, and 'Lys-63'-linked ubiquitin are then conjugated to monoubiquitin; RNF8 is able to extend 'Lys-63'-linked ubiquitin chains in vitro. Deubiquitinated by USP51 at Lys-14 and Lys-16 (H2AK13Ub and H2AK15Ub, respectively) after damaged DNA is repaired. H2AK119Ub and ionizing radiation-induced 'Lys-63'-linked ubiquitination (H2AK13Ub and H2AK15Ub) are distinct events. Post-translationally, phosphorylation on Ser-2 (H2AS1ph) is enhanced during mitosis. Phosphorylation on Ser-2 by RPS6KA5/MSK1 directly represses transcription. Acetylation of H3 inhibits Ser-2 phosphorylation by RPS6KA5/MSK1. Phosphorylation at Thr-121 (H2AT120ph) by DCAF1 is present in the regulatory region of many tumor suppresor genes and down-regulates their transcription. Glutamine methylation at Gln-105 (H2AQ104me) by FBL is specifically dedicated to polymerase I. It is present at 35S ribosomal DNA locus and impairs binding of the FACT complex. In terms of processing, symmetric dimethylation on Arg-4 by the PRDM1/PRMT5 complex may play a crucial role in the germ-cell lineage. Post-translationally, crotonylation (Kcr) is specifically present in male germ cells and marks testis-specific genes in post-meiotic cells, including X-linked genes that escape sex chromosome inactivation in haploid cells. Crotonylation marks active promoters and enhancers and confers resistance to transcriptional repressors. It is also associated with post-meiotically activated genes on autosomes. Lactylated in macrophages by EP300/P300 by using lactoyl-CoA directly derived from endogenous or exogenous lactate, leading to stimulates gene transcription.

The protein resides in the nucleus. It localises to the chromosome. Functionally, core component of nucleosome. Nucleosomes wrap and compact DNA into chromatin, limiting DNA accessibility to the cellular machineries which require DNA as a template. Histones thereby play a central role in transcription regulation, DNA repair, DNA replication and chromosomal stability. DNA accessibility is regulated via a complex set of post-translational modifications of histones, also called histone code, and nucleosome remodeling. This chain is Histone H2A type 1-J, found in Homo sapiens (Human).